Here is a 204-residue protein sequence, read N- to C-terminus: Anthranilate synthase component 2 (204 aa).

The Glutamine amidotransferase type-1 domain maps to 13–204; sequence RVLVVDNYDS…KNFLEDPWTR (192 aa). 64–66 lines the L-glutamine pocket; that stretch reads GPC. The active-site Nucleophile; for GATase activity is C91. L-glutamine contacts are provided by residues Q95 and 141–142; that span reads SL. Catalysis depends on for GATase activity residues H181 and E183.

As to quaternary structure, heterotetramer consisting of two non-identical subunits: a beta subunit (TrpG) and a large alpha subunit (TrpE).

The catalysed reaction is chorismate + L-glutamine = anthranilate + pyruvate + L-glutamate + H(+). It functions in the pathway amino-acid biosynthesis; L-tryptophan biosynthesis; L-tryptophan from chorismate: step 1/5. Its function is as follows. Part of a heterotetrameric complex that catalyzes the two-step biosynthesis of anthranilate, an intermediate in the biosynthesis of L-tryptophan. In the first step, the glutamine-binding beta subunit (TrpG) of anthranilate synthase (AS) provides the glutamine amidotransferase activity which generates ammonia as a substrate that, along with chorismate, is used in the second step, catalyzed by the large alpha subunit of AS (TrpE) to produce anthranilate. In the absence of TrpG, TrpE can synthesize anthranilate directly from chorismate and high concentrations of ammonia. The polypeptide is Anthranilate synthase component 2 (trpG) (Thermus thermophilus (strain ATCC 27634 / DSM 579 / HB8)).